Here is a 588-residue protein sequence, read N- to C-terminus: Proline--tRNA ligase (588 aa).

This sequence belongs to the class-II aminoacyl-tRNA synthetase family. ProS type 1 subfamily. As to quaternary structure, homodimer.

It is found in the cytoplasm. It carries out the reaction tRNA(Pro) + L-proline + ATP = L-prolyl-tRNA(Pro) + AMP + diphosphate. In terms of biological role, catalyzes the attachment of proline to tRNA(Pro) in a two-step reaction: proline is first activated by ATP to form Pro-AMP and then transferred to the acceptor end of tRNA(Pro). As ProRS can inadvertently accommodate and process non-cognate amino acids such as alanine and cysteine, to avoid such errors it has two additional distinct editing activities against alanine. One activity is designated as 'pretransfer' editing and involves the tRNA(Pro)-independent hydrolysis of activated Ala-AMP. The other activity is designated 'posttransfer' editing and involves deacylation of mischarged Ala-tRNA(Pro). The misacylated Cys-tRNA(Pro) is not edited by ProRS. This Corynebacterium glutamicum (strain ATCC 13032 / DSM 20300 / JCM 1318 / BCRC 11384 / CCUG 27702 / LMG 3730 / NBRC 12168 / NCIMB 10025 / NRRL B-2784 / 534) protein is Proline--tRNA ligase.